The following is a 185-amino-acid chain: Putative sulfur carrier protein YrkF (185 aa).

Catalysis depends on C15, which acts as the Cysteine persulfide intermediate. Residues 101-185 (SDESLNILDV…GMRDWTGKTE (85 aa)) form the Rhodanese domain.

This sequence belongs to the sulfur carrier protein TusA family.

The protein is Putative sulfur carrier protein YrkF (yrkF) of Bacillus subtilis (strain 168).